We begin with the raw amino-acid sequence, 131 residues long: MNTKITNIIEDLKSLTLLEAAELIKQIEETFDVDASITSQSQAIVMPTAVDNSNKNEIEEKTEFDIILEEVPAAKKIAILKVVRSITGLGLKEAKALVESAPKMIKDNTNKENSEEIKQQLEEAGAKVSIK.

The segment covering 106–125 (KDNTNKENSEEIKQQLEEAG) has biased composition (basic and acidic residues). Residues 106 to 131 (KDNTNKENSEEIKQQLEEAGAKVSIK) are disordered.

The protein belongs to the bacterial ribosomal protein bL12 family. Homodimer. Part of the ribosomal stalk of the 50S ribosomal subunit. Forms a multimeric L10(L12)X complex, where L10 forms an elongated spine to which 2 to 4 L12 dimers bind in a sequential fashion. Binds GTP-bound translation factors.

The protein resides in the plastid. It localises to the chloroplast. Its function is as follows. Forms part of the ribosomal stalk which helps the ribosome interact with GTP-bound translation factors. Is thus essential for accurate translation. The protein is Large ribosomal subunit protein bL12c of Gracilaria tenuistipitata var. liui (Red alga).